The primary structure comprises 305 residues: tRNA dimethylallyltransferase (305 aa).

15–22 (GPTASGKS) is a binding site for ATP. Residue 17–22 (TASGKS) coordinates substrate. 2 interaction with substrate tRNA regions span residues 40–43 (DSMQ) and 164–168 (QRIVR).

Belongs to the IPP transferase family. In terms of assembly, monomer. Mg(2+) serves as cofactor.

The catalysed reaction is adenosine(37) in tRNA + dimethylallyl diphosphate = N(6)-dimethylallyladenosine(37) in tRNA + diphosphate. In terms of biological role, catalyzes the transfer of a dimethylallyl group onto the adenine at position 37 in tRNAs that read codons beginning with uridine, leading to the formation of N6-(dimethylallyl)adenosine (i(6)A). This Sinorhizobium medicae (strain WSM419) (Ensifer medicae) protein is tRNA dimethylallyltransferase.